Here is a 485-residue protein sequence, read N- to C-terminus: Glutamate--tRNA ligase (485 aa).

Residues 11–21 (PSPTGYMHVGN) carry the 'HIGH' region motif. Zn(2+) contacts are provided by C108, C110, C135, and D137. The 'KMSKS' region signature appears at 252 to 256 (KLSKR). K255 contacts ATP.

Belongs to the class-I aminoacyl-tRNA synthetase family. Glutamate--tRNA ligase type 1 subfamily. In terms of assembly, monomer. It depends on Zn(2+) as a cofactor.

The protein localises to the cytoplasm. It catalyses the reaction tRNA(Glu) + L-glutamate + ATP = L-glutamyl-tRNA(Glu) + AMP + diphosphate. Catalyzes the attachment of glutamate to tRNA(Glu) in a two-step reaction: glutamate is first activated by ATP to form Glu-AMP and then transferred to the acceptor end of tRNA(Glu). This chain is Glutamate--tRNA ligase, found in Clostridium botulinum (strain ATCC 19397 / Type A).